A 380-amino-acid polypeptide reads, in one-letter code: Erythronate-4-phosphate dehydrogenase (380 aa).

Serine 45 and threonine 66 together coordinate substrate. NAD(+) is bound by residues 126–127 (QV), aspartate 146, threonine 174, 205–207 (ASR), and aspartate 231. Residue arginine 207 is part of the active site. The active site involves glutamate 236. Catalysis depends on histidine 253, which acts as the Proton donor. Residue glycine 256 coordinates NAD(+). Substrate is bound at residue tyrosine 257.

This sequence belongs to the D-isomer specific 2-hydroxyacid dehydrogenase family. PdxB subfamily. As to quaternary structure, homodimer.

It is found in the cytoplasm. The catalysed reaction is 4-phospho-D-erythronate + NAD(+) = (R)-3-hydroxy-2-oxo-4-phosphooxybutanoate + NADH + H(+). It functions in the pathway cofactor biosynthesis; pyridoxine 5'-phosphate biosynthesis; pyridoxine 5'-phosphate from D-erythrose 4-phosphate: step 2/5. Its function is as follows. Catalyzes the oxidation of erythronate-4-phosphate to 3-hydroxy-2-oxo-4-phosphonooxybutanoate. In Pseudomonas savastanoi pv. phaseolicola (strain 1448A / Race 6) (Pseudomonas syringae pv. phaseolicola (strain 1448A / Race 6)), this protein is Erythronate-4-phosphate dehydrogenase.